Here is a 1233-residue protein sequence, read N- to C-terminus: Pesticidal crystal protein Cry1Bc (1233 aa).

This sequence belongs to the delta endotoxin family.

Functionally, promotes colloidosmotic lysis by binding to the midgut epithelial cells of insects. The protein is Pesticidal crystal protein Cry1Bc (cry1Bc) of Bacillus thuringiensis subsp. morrisoni.